A 469-amino-acid polypeptide reads, in one-letter code: ATP synthase subunit beta (469 aa).

153-160 contacts ATP; it reads GGAGVGKT.

It belongs to the ATPase alpha/beta chains family. F-type ATPases have 2 components, CF(1) - the catalytic core - and CF(0) - the membrane proton channel. CF(1) has five subunits: alpha(3), beta(3), gamma(1), delta(1), epsilon(1). CF(0) has three main subunits: a(1), b(2) and c(9-12). The alpha and beta chains form an alternating ring which encloses part of the gamma chain. CF(1) is attached to CF(0) by a central stalk formed by the gamma and epsilon chains, while a peripheral stalk is formed by the delta and b chains.

The protein localises to the cell membrane. The enzyme catalyses ATP + H2O + 4 H(+)(in) = ADP + phosphate + 5 H(+)(out). Its function is as follows. Produces ATP from ADP in the presence of a proton gradient across the membrane. The catalytic sites are hosted primarily by the beta subunits. The protein is ATP synthase subunit beta of Pediococcus pentosaceus (strain ATCC 25745 / CCUG 21536 / LMG 10740 / 183-1w).